Consider the following 227-residue polypeptide: uncharacterized protein (227 aa).

Residues 52–100 (NKRAKLYRERNKAKLKEKQHKWYHKGGGKEHKKLYDKINLEKSNMRDKN) adopt a coiled-coil conformation.

It belongs to the mimivirus L246/L426 family.

This is an uncharacterized protein from Acanthamoeba polyphaga mimivirus (APMV).